The chain runs to 292 residues: Protease HtpX (292 aa).

2 helical membrane-spanning segments follow: residues 5–25 (VVLF…VMSV) and 35–55 (GLLV…LLLS). His140 contacts Zn(2+). Residue Glu141 is part of the active site. His144 serves as a coordination point for Zn(2+). 2 helical membrane passes run 155–175 (LLQG…GGII) and 193–213 (IIVF…AMWF). Glu218 serves as a coordination point for Zn(2+).

It belongs to the peptidase M48B family. Zn(2+) is required as a cofactor.

Its subcellular location is the cell inner membrane. This is Protease HtpX from Xanthomonas campestris pv. campestris (strain 8004).